Consider the following 233-residue polypeptide: Synaptogyrin-1 (233 aa).

N-acetylmethionine is present on methionine 1. Residues 1 to 23 (MEGGAYGAGKAGGAFDPYTLVRQ) are Cytoplasmic-facing. Residues 20-173 (LVRQPHTILR…QAVLAFQRYQ (154 aa)) form the MARVEL domain. The chain crosses the membrane as a helical span at residues 24-44 (PHTILRVVSWLFSIVVFGSIV). Topologically, residues 45–71 (NEGYLNSASEGEEFCIYNRNPNACSYG) are lumenal. A helical transmembrane segment spans residues 72–92 (VAVGVLAFLTCLLYLALDVYF). At 93 to 103 (PQISSVKDRKK) the chain is on the cytoplasmic side. Residues 104 to 124 (AVLSDIGVSAFWAFLWFVGFC) traverse the membrane as a helical segment. Over 125 to 148 (YLANQWQVSKPKDNPLNEGTDAAR) the chain is Lumenal. Residues 149–169 (AAIAFSFFSIFTWAGQAVLAF) traverse the membrane as a helical segment. Residues 170-233 (QRYQIGADSA…EPQGYQSQGY (64 aa)) are Cytoplasmic-facing. The interval 194–233 (MPYAPYVEPTGPDPAGMGGTYQQPANTFDTEPQGYQSQGY) is disordered. Residues 213-233 (TYQQPANTFDTEPQGYQSQGY) are compositionally biased toward polar residues.

This sequence belongs to the synaptogyrin family.

Its subcellular location is the cytoplasmic vesicle. The protein resides in the secretory vesicle. It localises to the synaptic vesicle membrane. The protein localises to the melanosome. In terms of biological role, may play a role in regulated exocytosis. Modulates the localization of synaptophysin/SYP into synaptic-like microvesicles and may therefore play a role in synaptic-like microvesicle formation and/or maturation. Involved in the regulation of short-term and long-term synaptic plasticity. The chain is Synaptogyrin-1 from Homo sapiens (Human).